An 828-amino-acid chain; its full sequence is Chitin synthase 7 (828 aa).

6 helical membrane passes run 17–37 (VIVG…VAAF), 57–77 (AVVV…IMVV), 95–115 (VGLQ…PWLF), 444–464 (FMQN…LAIL), 473–493 (LPVG…IYFG), and 501–521 (IWLY…YMVY). An N-linked (GlcNAc...) asparagine glycan is attached at N615. 2 stretches are compositionally biased toward low complexity: residues 740 to 752 (SLVS…SNSN) and 813 to 822 (SNNDPNNSNS). Disordered stretches follow at residues 740 to 780 (SLVS…LGRA) and 793 to 828 (LEIG…HQQR). The N-linked (GlcNAc...) asparagine glycan is linked to N818.

It belongs to the chitin synthase family. Class VII subfamily.

The protein localises to the membrane. The enzyme catalyses [(1-&gt;4)-N-acetyl-beta-D-glucosaminyl](n) + UDP-N-acetyl-alpha-D-glucosamine = [(1-&gt;4)-N-acetyl-beta-D-glucosaminyl](n+1) + UDP + H(+). Functionally, polymerizes chitin, a structural polymer of the cell wall and septum, by transferring the sugar moiety of UDP-GlcNAc to the non-reducing end of the growing chitin polymer. Required for normal appressorial chitin content and for the normal formation and function of these infection structures. In Pyricularia oryzae (strain 70-15 / ATCC MYA-4617 / FGSC 8958) (Rice blast fungus), this protein is Chitin synthase 7.